The sequence spans 521 residues: Occludin (521 aa).

At 1–66 (MSSRPFESPP…KWTSPPGVIR (66 aa)) the chain is on the cytoplasmic side. Residues 60-268 (SPPGVIRILS…IIFFAVKTRR (209 aa)) enclose the MARVEL domain. The chain crosses the membrane as a helical span at residues 67–89 (ILSMLVIVMCIAIFGCVASTLAW). Residues 90–134 (DRGYGTGLMGGSIGYPYGSGFGSYGTGYGYGFGYGYGYGGYTDPR) are Extracellular-facing. A helical transmembrane segment spans residues 135-159 (AAKGFLLAMVAFCFIAALVIFVTSV). The Cytoplasmic segment spans residues 160–169 (IRSDISRTRR). The helical transmembrane segment at 170 to 194 (YYLTVIILSAFLGVMMFIATIVYIM) threads the bilayer. Over 195–242 (GVNPTAQASGSLYSSQIYAMCNQFYASTATGLYMDQYLYHYCVVDPQE) the chain is Extracellular. Residues Cys215 and Cys236 are joined by a disulfide bond. Residues 243–264 (AIAIVLGFMVIVAFALIIFFAV) traverse the membrane as a helical segment. The Cytoplasmic segment spans residues 265–521 (KTRRKMDRYD…MVGDYDRQKT (257 aa)). Ser301 carries the post-translational modification Phosphoserine. Positions 301 to 407 (SAGTQDMPPP…ETDYTTGGES (107 aa)) are disordered. Thr304 is modified (phosphothreonine). A phosphoserine mark is found at Ser312, Ser320, and Ser339. At Tyr367 the chain carries Phosphotyrosine. Ser368 and Ser369 each carry phosphoserine. Residues 380–389 (APSKGRTGRP) show a composition bias toward basic residues. Over residues 390-399 (KRLEQDHYET) the composition is skewed to basic and acidic residues. 2 positions are modified to phosphotyrosine: Tyr397 and Tyr401. Phosphothreonine; by PKC/PRKCH occurs at positions 402 and 403. The residue at position 407 (Ser407) is a Phosphoserine. The OCEL domain maps to 413-521 (EDWIREYPPI…MVGDYDRQKT (109 aa)). Residues 424-488 (SDQQRQLYKR…EYNRLKQVKG (65 aa)) are a coiled coil. Ser489 carries the phosphoserine modification.

This sequence belongs to the ELL/occludin family. As to quaternary structure, interacts with TJP1/ZO1. Interacts with VAPA. Interacts with CLDN1, CLDN6, CLDN9, CLDN11, CLDN12 and CLDN17. Interacts with PLSCR1. Interacts with LSR, ILDR1 and ILDR2. Interacts with TJP2/ZO2. Dephosphorylated by PTPRJ. Less-phosphorylated forms are found in basolateral membrane, cytosol and tight junction. More-heavily phosphorylated forms are concentrated exclusively in tight junction. As to expression, localized at tight junctions of both epithelial and endothelial cells.

The protein resides in the cell membrane. It is found in the cell junction. It localises to the tight junction. In terms of biological role, may play a role in the formation and regulation of the tight junction (TJ) paracellular permeability barrier. Interacts with ZO-1. This chain is Occludin (OCLN), found in Canis lupus familiaris (Dog).